The primary structure comprises 348 residues: Malyl-CoA/beta-methylmalyl-CoA/citramalyl-CoA lyase (348 aa).

Residues 32–33 (HF), K40, and R92 contribute to the substrate site. Mg(2+) contacts are provided by E157 and D184. Residues 183 to 184 (AD) and L274 each bind substrate.

The protein belongs to the HpcH/HpaI aldolase family. In terms of assembly, homohexamer. Dimer of trimers. Mg(2+) serves as cofactor. Mn(2+) is required as a cofactor.

It carries out the reaction (S)-malyl-CoA = glyoxylate + acetyl-CoA. It catalyses the reaction (2R,3S)-beta-methylmalyl-CoA = propanoyl-CoA + glyoxylate. The enzyme catalyses (3S)-citramalyl-CoA = pyruvate + acetyl-CoA. With respect to regulation, inhibited by oxalate. Functionally, involved in the 3-hydroxypropionate cycle used for autotrophic carbon dioxide fixation, and in the glyoxylate assimilation cycle used to regenerate acetyl-CoA and produce pyruvate as universal precursor for biosynthesis. As a part of the 3-hydroxypropionate cycle, it catalyzes the cleavage of (S)-malyl-CoA to yield acetyl-CoA and glyoxylate. As part of the glyoxylate assimilation cycle, it catalyzes the condensation of glyoxylate with propionyl-CoA to yield (2R,3S)-beta-methylmalyl-CoA, and catalyzes the cleavage of (S)-citramalyl-CoA to yield acetyl-CoA and pyruvate. The sequence is that of Malyl-CoA/beta-methylmalyl-CoA/citramalyl-CoA lyase (mcl) from Chloroflexus aurantiacus.